The following is a 361-amino-acid chain: Peptide chain release factor 1 (361 aa).

Q236 is subject to N5-methylglutamine.

This sequence belongs to the prokaryotic/mitochondrial release factor family. Methylated by PrmC. Methylation increases the termination efficiency of RF1.

Its subcellular location is the cytoplasm. In terms of biological role, peptide chain release factor 1 directs the termination of translation in response to the peptide chain termination codons UAG and UAA. This Lactobacillus delbrueckii subsp. bulgaricus (strain ATCC 11842 / DSM 20081 / BCRC 10696 / JCM 1002 / NBRC 13953 / NCIMB 11778 / NCTC 12712 / WDCM 00102 / Lb 14) protein is Peptide chain release factor 1.